A 209-amino-acid polypeptide reads, in one-letter code: V-type ATP synthase subunit D (209 aa).

This sequence belongs to the V-ATPase D subunit family.

In terms of biological role, produces ATP from ADP in the presence of a proton gradient across the membrane. This Thermoanaerobacter pseudethanolicus (strain ATCC 33223 / 39E) (Clostridium thermohydrosulfuricum) protein is V-type ATP synthase subunit D.